A 367-amino-acid polypeptide reads, in one-letter code: Lysophosphatidic acid receptor 5 (367 aa).

Over 1–25 (MQANSSAKSLPTECPDYQPIHHLHL) the chain is Extracellular. Residue asparagine 4 is glycosylated (N-linked (GlcNAc...) asparagine). Residues 26–46 (VVYSVVLAAGLPLNALALWVF) traverse the membrane as a helical segment. The Cytoplasmic segment spans residues 47–54 (LRALRVHS). The chain crosses the membrane as a helical span at residues 55–75 (VVSVYMCNLAASDLLFTLSLP). Residues 76–95 (LRLSYYARHYWPFPDFLCQL) are Extracellular-facing. The cysteines at positions 93 and 174 are disulfide-linked. A helical transmembrane segment spans residues 96–116 (AGAVFQMNMYGSCIFLTLINV). Residues 117–135 (DRYAAIVHPLRLRHLRRPR) are Cytoplasmic-facing. A helical membrane pass occupies residues 136–156 (VARLLCLGVWALILVFAVPTI). Topologically, residues 157 to 186 (LAHQPSSCARDGRNVSLCFESFSDKLWKGS) are extracellular. Residue asparagine 170 is glycosylated (N-linked (GlcNAc...) asparagine). Residues 187 to 207 (LLPLLLLAEALGFLLPLAAVV) form a helical membrane-spanning segment. Topologically, residues 208 to 238 (YSSGRVFWTLARPDATRSQRRRKTVRLLLAS) are cytoplasmic. A helical membrane pass occupies residues 239 to 259 (LVIFLLCFVPYNATLAVYGLL). Residues 260–275 (RGEVVPASSEARKKVR) are Extracellular-facing. A helical membrane pass occupies residues 276–296 (GVLMVMVLLAGANCVLDPLVY). Residues 297 to 367 (YFSAEGFRNT…FTPSHEDSSF (71 aa)) are Cytoplasmic-facing. Over residues 332–350 (LTETAHASTLTTTSQGQLQ) the composition is skewed to low complexity. Residues 332 to 367 (LTETAHASTLTTTSQGQLQPSDPRSSFTPSHEDSSF) are disordered. Polar residues predominate over residues 351–360 (PSDPRSSFTP).

It belongs to the G-protein coupled receptor 1 family.

It is found in the cell membrane. Functionally, receptor for lysophosphatidic acid (LPA), a mediator of diverse cellular activities. This is Lysophosphatidic acid receptor 5 (LPAR5) from Bos taurus (Bovine).